The following is a 1029-amino-acid chain: Carbamoyl phosphate synthase large chain (1029 aa).

A carboxyphosphate synthetic domain region spans residues 1 to 402 (MPKRTDLQTI…SLQKALRSTE (402 aa)). Residues arginine 129, arginine 169, glycine 175, glycine 176, glutamate 208, isoleucine 210, glutamate 215, glycine 241, valine 242, histidine 243, glutamine 285, and glutamate 299 each coordinate ATP. The 196-residue stretch at 133 to 328 (QAAMKKIGVE…IAKIAALLAV (196 aa)) folds into the ATP-grasp 1 domain. Residues glutamine 285, glutamate 299, and asparagine 301 each coordinate Mg(2+). Residues glutamine 285, glutamate 299, and asparagine 301 each contribute to the Mn(2+) site. Residues 403 to 546 (SDVRGAFAEM…YSTYEWEDEV (144 aa)) form an oligomerization domain region. The tract at residues 547–929 (TPTDKPKVVI…AYYRAELGAK (383 aa)) is carbamoyl phosphate synthetic domain. Positions 671–863 (NALCERLGLP…LAKYAARIAV (193 aa)) constitute an ATP-grasp 2 domain. Arginine 707, glutamine 747, leucine 749, glutamate 754, glycine 779, valine 780, histidine 781, serine 782, glutamine 822, and glutamate 834 together coordinate ATP. Mg(2+) is bound by residues glutamine 822, glutamate 834, and asparagine 836. Residues glutamine 822, glutamate 834, and asparagine 836 each contribute to the Mn(2+) site. Positions 930-1028 (SNLPLSGTAL…QAWQQREAAA (99 aa)) constitute an MGS-like domain. Residues 930-1029 (SNLPLSGTAL…AWQQREAAAS (100 aa)) are allosteric domain.

This sequence belongs to the CarB family. Composed of two chains; the small (or glutamine) chain promotes the hydrolysis of glutamine to ammonia, which is used by the large (or ammonia) chain to synthesize carbamoyl phosphate. Tetramer of heterodimers (alpha,beta)4. The cofactor is Mg(2+). Requires Mn(2+) as cofactor.

It carries out the reaction hydrogencarbonate + L-glutamine + 2 ATP + H2O = carbamoyl phosphate + L-glutamate + 2 ADP + phosphate + 2 H(+). The catalysed reaction is hydrogencarbonate + NH4(+) + 2 ATP = carbamoyl phosphate + 2 ADP + phosphate + 2 H(+). The protein operates within amino-acid biosynthesis; L-arginine biosynthesis; carbamoyl phosphate from bicarbonate: step 1/1. Its pathway is pyrimidine metabolism; UMP biosynthesis via de novo pathway; (S)-dihydroorotate from bicarbonate: step 1/3. Functionally, large subunit of the glutamine-dependent carbamoyl phosphate synthetase (CPSase). CPSase catalyzes the formation of carbamoyl phosphate from the ammonia moiety of glutamine, carbonate, and phosphate donated by ATP, constituting the first step of 2 biosynthetic pathways, one leading to arginine and/or urea and the other to pyrimidine nucleotides. The large subunit (synthetase) binds the substrates ammonia (free or transferred from glutamine from the small subunit), hydrogencarbonate and ATP and carries out an ATP-coupled ligase reaction, activating hydrogencarbonate by forming carboxy phosphate which reacts with ammonia to form carbamoyl phosphate. The chain is Carbamoyl phosphate synthase large chain from Deinococcus geothermalis (strain DSM 11300 / CIP 105573 / AG-3a).